We begin with the raw amino-acid sequence, 669 residues long: Bestrophin-3 (669 aa).

Over M1–L31 the chain is Cytoplasmic. Ca(2+) is bound at residue A10. Residues L32–R51 form a helical membrane-spanning segment. Residues L52–R60 are Extracellular-facing. A helical membrane pass occupies residues Y61–L82. Residues G83 to T237 are Cytoplasmic-facing. A helical transmembrane segment spans residues Q238–R255. Over Q256–P274 the chain is Extracellular. A helical transmembrane segment spans residues I275–L288. At K289–F669 the chain is on the cytoplasmic side. The Ca(2+) site is built by Q293, N296, D301, and D304. 4 disordered regions span residues L399 to P496, Q533 to T560, T591 to S627, and I646 to F669. A compositionally biased stretch (basic residues) spans N440–S451. Low complexity predominate over residues R475 to P492. Polar residues predominate over residues Q533–P543. Over residues I646–E656 the composition is skewed to basic and acidic residues.

It belongs to the anion channel-forming bestrophin (TC 1.A.46) family. Calcium-sensitive chloride channel subfamily. Expressed in heart. As to expression, expressed in brain, retina/retinal pigment epithelium (RPE) and skeletal muscle. Expressed in acinar cells of parotid glands. Expressed in lung, kidney and testis.

Its subcellular location is the cell membrane. It carries out the reaction chloride(in) = chloride(out). Its function is as follows. Ligand-gated anion channel that allows the movement of chloride monoatomic anions across cell membranes when activated by calcium (Ca2+). Functionally, does not function as calcium-gated chloride channel. The polypeptide is Bestrophin-3 (Best3) (Mus musculus (Mouse)).